A 653-amino-acid chain; its full sequence is Acetyl-coenzyme A synthetase 1 (653 aa).

CoA contacts are provided by residues 191-194, Thr-311, and Asn-335; that span reads RGGR. ATP is bound by residues 387 to 389, 411 to 416, Asp-500, and Arg-515; these read GEP and DTWWQT. Ser-523 serves as a coordination point for CoA. Arg-526 is an ATP binding site. Val-537, His-539, and Val-542 together coordinate Mg(2+). Arg-584 is a binding site for CoA. Lys-609 is subject to N6-acetyllysine.

The protein belongs to the ATP-dependent AMP-binding enzyme family. The cofactor is Mg(2+). Acetylated. Deacetylation by the SIR2-homolog deacetylase activates the enzyme.

It carries out the reaction acetate + ATP + CoA = acetyl-CoA + AMP + diphosphate. In terms of biological role, catalyzes the conversion of acetate into acetyl-CoA (AcCoA), an essential intermediate at the junction of anabolic and catabolic pathways. AcsA undergoes a two-step reaction. In the first half reaction, AcsA combines acetate with ATP to form acetyl-adenylate (AcAMP) intermediate. In the second half reaction, it can then transfer the acetyl group from AcAMP to the sulfhydryl group of CoA, forming the product AcCoA. The sequence is that of Acetyl-coenzyme A synthetase 1 from Pseudomonas putida (strain ATCC 47054 / DSM 6125 / CFBP 8728 / NCIMB 11950 / KT2440).